The following is a 611-amino-acid chain: Leukotriene A-4 hydrolase (611 aa).

Residue Lys73 is modified to N6-acetyllysine. A peptide is bound by residues Gln135 to Gln137 and Pro267 to Glu272. His296 contributes to the Zn(2+) binding site. Residue Glu297 is the Proton acceptor of the active site. His300 and Glu319 together coordinate Zn(2+). An N6-acetyllysine modification is found at Lys337. Residue Tyr384 is the Proton donor of the active site. Lys414 is subject to N6-acetyllysine. At Ser416 the chain carries Phosphoserine. Arg564–Lys566 is a binding site for a peptide. The residue at position 573 (Lys573) is an N6-acetyllysine.

It belongs to the peptidase M1 family. In terms of assembly, monomer. It depends on Zn(2+) as a cofactor. In terms of processing, phosphorylation at Ser-416 inhibits leukotriene-A4 hydrolase activity. In terms of tissue distribution, isoform 1 and isoform 2 are expressed in monocytes, lymphocytes, neutrophils, reticulocytes, platelets and fibroblasts.

The protein resides in the cytoplasm. The catalysed reaction is leukotriene A4 + H2O = leukotriene B4. It carries out the reaction (5S,6S)-epoxy-(18R)-hydroxy-(7E,9E,11Z,14Z,16E)-eicosapentaenoate + H2O = resolvin E1. It catalyses the reaction (5S,6S)-epoxy-(18S)-hydroxy-(7E,9E,11Z,14Z,16E)-eicosapentaenoate + H2O = 18S-resolvin E1. The enzyme catalyses Release of the N-terminal residue from a tripeptide.. Its pathway is lipid metabolism; leukotriene B4 biosynthesis. Its activity is regulated as follows. Inhibited by bestatin. The epoxide hydrolase activity is restrained by suicide inactivation that involves binding of LTA4 to Tyr-379. 4-(4-benzylphenyl)thiazol-2-amine (ARM1) selectively inhibits the epoxide hydrolase activity. Bifunctional zinc metalloenzyme that comprises both epoxide hydrolase (EH) and aminopeptidase activities. Acts as an epoxide hydrolase to catalyze the conversion of LTA4 to the pro-inflammatory mediator leukotriene B4 (LTB4). Also has aminopeptidase activity, with high affinity for N-terminal arginines of various synthetic tripeptides. In addition to its pro-inflammatory EH activity, may also counteract inflammation by its aminopeptidase activity, which inactivates by cleavage another neutrophil attractant, the tripeptide Pro-Gly-Pro (PGP), a bioactive fragment of collagen generated by the action of matrix metalloproteinase-9 (MMP9) and prolylendopeptidase (PREPL). Involved also in the biosynthesis of resolvin E1 and 18S-resolvin E1 from eicosapentaenoic acid, two lipid mediators that show potent anti-inflammatory and pro-resolving actions. The polypeptide is Leukotriene A-4 hydrolase (LTA4H) (Homo sapiens (Human)).